The primary structure comprises 310 residues: Fatty acid elongase 1 (310 aa).

At 1–63 the chain is on the lumenal side; that stretch reads MVSDWKNFCL…VGKQPLSEPR (63 aa). A helical membrane pass occupies residues 64-84; the sequence is PVLLFIAMYYVVIFGGRSLVK. Residues 85–100 lie on the Cytoplasmic side of the membrane; sequence SCKPLKLRFISQVHNL. Residues 101–121 form a helical membrane-spanning segment; the sequence is MLTSVSFLWLILMVEQMLPIV. Topologically, residues 122–141 are lumenal; sequence YRHGLYFAVCNVESWTQPME. Residues 142–163 traverse the membrane as a helical segment; that stretch reads TLYYLNYMTKFVEFADTVLMVL. At 164–174 the chain is on the cytoplasmic side; that stretch reads KHRKLTFLHTY. Positions 172–176 match the HxxHH motif motif; that stretch reads HTYHH. Residues 175–196 form a helical membrane-spanning segment; it reads HHGATALLCYNQLVGYTAVTWV. The Lumenal segment spans residues 197–201; that stretch reads PVTLN. The helical transmembrane segment at 202-223 threads the bilayer; the sequence is LAVHVLMYWYYFLSASGIRVWW. Topologically, residues 224 to 234 are cytoplasmic; that stretch reads KAWVTRLQIVQ. A helical membrane pass occupies residues 235 to 255; that stretch reads FMLDLIVVYYVLYQKIVAAYF. At 256–271 the chain is on the lumenal side; the sequence is KNACTPQCEDCLGSMT. Residues 272 to 292 form a helical membrane-spanning segment; it reads AIAAGAAILTSYLFLFISFYI. Over 293-310 the chain is Cytoplasmic; sequence EVYKRGSASGKKKINKNN. The Di-lysine motif signature appears at 304 to 307; the sequence is KKIN.

Belongs to the ELO family.

Its subcellular location is the endoplasmic reticulum membrane. It carries out the reaction a very-long-chain acyl-CoA + malonyl-CoA + H(+) = a very-long-chain 3-oxoacyl-CoA + CO2 + CoA. It catalyses the reaction tetradecanoyl-CoA + malonyl-CoA + H(+) = 3-oxohexadecanoyl-CoA + CO2 + CoA. The catalysed reaction is (9Z)-tetradecenoyl-CoA + malonyl-CoA + H(+) = 3-oxo-(11Z)-hexadecenoyl-CoA + CO2 + CoA. Functionally, component of a microsomal membrane bound medium-chain fatty acid elongation system, which extends medium-chain-length fatty acids to long-chain fatty acids. Component of elongase I, which extends 12-16-carbon fatty acyl-CoAs such as lauroyl-CoA to 14-18-carbon fatty acids by incorporation of malonyl-CoA. This Saccharomyces cerevisiae (strain ATCC 204508 / S288c) (Baker's yeast) protein is Fatty acid elongase 1.